The primary structure comprises 311 residues: Aspartate carbamoyltransferase catalytic subunit (311 aa).

Carbamoyl phosphate contacts are provided by arginine 52 and threonine 53. Lysine 80 is an L-aspartate binding site. Arginine 102, histidine 131, and glutamine 134 together coordinate carbamoyl phosphate. The L-aspartate site is built by arginine 164 and arginine 216. Positions 259 and 260 each coordinate carbamoyl phosphate.

This sequence belongs to the aspartate/ornithine carbamoyltransferase superfamily. ATCase family. In terms of assembly, heterododecamer (2C3:3R2) of six catalytic PyrB chains organized as two trimers (C3), and six regulatory PyrI chains organized as three dimers (R2).

It carries out the reaction carbamoyl phosphate + L-aspartate = N-carbamoyl-L-aspartate + phosphate + H(+). It participates in pyrimidine metabolism; UMP biosynthesis via de novo pathway; (S)-dihydroorotate from bicarbonate: step 2/3. In terms of biological role, catalyzes the condensation of carbamoyl phosphate and aspartate to form carbamoyl aspartate and inorganic phosphate, the committed step in the de novo pyrimidine nucleotide biosynthesis pathway. The chain is Aspartate carbamoyltransferase catalytic subunit from Lactiplantibacillus plantarum (strain ATCC BAA-793 / NCIMB 8826 / WCFS1) (Lactobacillus plantarum).